The following is a 130-amino-acid chain: Guanylate kinase (130 aa).

Residues 1-130 enclose the Guanylate kinase-like domain; the sequence is KIFEDPTTSY…EKIQSRVNEA (130 aa).

Belongs to the guanylate kinase family.

It localises to the cytoplasm. It carries out the reaction GMP + ATP = GDP + ADP. In terms of biological role, essential for recycling GMP and indirectly, cGMP. The chain is Guanylate kinase (gmk) from Staphylococcus epidermidis.